A 581-amino-acid chain; its full sequence is ATP-dependent lipid A-core flippase (581 aa).

A run of 5 helical transmembrane segments spans residues 15–35, 68–88, 152–172, 252–272, and 274–294; these read LWPI…ALIL, LIVI…SYCI, IIGL…ILIV, PIIQ…ASFP, and IMET…IALM. Residues 27-309 enclose the ABC transmembrane type-1 domain; it reads IVAAVALILN…LTNVNAQFQR (283 aa). The 237-residue stretch at 341–577 folds into the ABC transporter domain; the sequence is IEFRNVTFCY…NGVYSQLHRM (237 aa). 375–382 serves as a coordination point for ATP; it reads GRSGSGKS.

Belongs to the ABC transporter superfamily. Lipid exporter (TC 3.A.1.106) family. In terms of assembly, homodimer.

It is found in the cell inner membrane. It catalyses the reaction ATP + H2O + lipid A-core oligosaccharideSide 1 = ADP + phosphate + lipid A-core oligosaccharideSide 2.. In terms of biological role, involved in lipopolysaccharide (LPS) biosynthesis. Translocates lipid A-core from the inner to the outer leaflet of the inner membrane. Transmembrane domains (TMD) form a pore in the inner membrane and the ATP-binding domain (NBD) is responsible for energy generation. In Photorhabdus laumondii subsp. laumondii (strain DSM 15139 / CIP 105565 / TT01) (Photorhabdus luminescens subsp. laumondii), this protein is ATP-dependent lipid A-core flippase.